Reading from the N-terminus, the 492-residue chain is Catalase-1 (492 aa).

Active-site residues include histidine 65 and asparagine 138. Tyrosine 348 lines the heme pocket.

Belongs to the catalase family. Homotetramer. Requires heme as cofactor.

The protein resides in the peroxisome. Its subcellular location is the glyoxysome. It carries out the reaction 2 H2O2 = O2 + 2 H2O. Functionally, occurs in almost all aerobically respiring organisms and serves to protect cells from the toxic effects of hydrogen peroxide. The chain is Catalase-1 (CAT1) from Triticum aestivum (Wheat).